The following is a 391-amino-acid chain: tRNA(Met) cytidine acetate ligase (391 aa).

ATP-binding positions include 7–20 (IAEY…HIYQ), Gly-101, Asn-153, and Arg-178.

The protein belongs to the TmcAL family.

Its subcellular location is the cytoplasm. The catalysed reaction is cytidine(34) in elongator tRNA(Met) + acetate + ATP = N(4)-acetylcytidine(34) in elongator tRNA(Met) + AMP + diphosphate. Functionally, catalyzes the formation of N(4)-acetylcytidine (ac(4)C) at the wobble position of elongator tRNA(Met), using acetate and ATP as substrates. First activates an acetate ion to form acetyladenylate (Ac-AMP) and then transfers the acetyl group to tRNA to form ac(4)C34. The chain is tRNA(Met) cytidine acetate ligase from Latilactobacillus sakei subsp. sakei (strain 23K) (Lactobacillus sakei subsp. sakei).